The primary structure comprises 456 residues: Proline-specific permease ProY (456 aa).

The Cytoplasmic portion of the chain corresponds to 1 to 17; the sequence is MESNNKLKRGLSTRHIR. A run of 2 helical transmembrane segments spans residues 18-38 and 39-59; these read FMAL…DAIK and MAGP…YIIM. Residues 60 to 95 lie on the Cytoplasmic side of the membrane; the sequence is RALGEMSVHNPAASSFSRYAQENLGPLAGYITGWTY. The next 2 helical transmembrane spans lie at 96 to 116 and 117 to 137; these read CFEI…YMGV and WFPA…ICAI. Residues 138 to 156 lie on the Cytoplasmic side of the membrane; it reads NLMSVKVFGELEFWFSFFK. Residues 157 to 177 form a helical membrane-spanning segment; sequence VATIIIMIVAGIGIIVWGIGN. Topologically, residues 178 to 197 are periplasmic; sequence GGQPTGIHNLWSNGGFFSNG. The chain crosses the membrane as a helical span at residues 198 to 218; sequence WLGMIMSLQMVMFAYGGIEII. Residues 219–242 lie on the Cytoplasmic side of the membrane; the sequence is GITAGEAKDPEKSIPRAINSVPMR. A helical transmembrane segment spans residues 243-263; the sequence is ILVFYVGTLFVIMSIYPWNQV. Over 264–277 the chain is Periplasmic; sequence GTNGSPFVLTFQHM. A helical transmembrane segment spans residues 278 to 298; that stretch reads GITFAASILNFVVLTASLSAI. The Cytoplasmic portion of the chain corresponds to 299-331; it reads NSDVFGVGRMLHGMAEQGSAPKVFAKTSRRGIP. Residues 332–352 traverse the membrane as a helical segment; that stretch reads WVTVLVMTIALLFAVYLNYIM. Topologically, residues 353–355 are periplasmic; the sequence is PEN. A helical membrane pass occupies residues 356–376; sequence VFLVIASLATFATVWVWIMIL. The Cytoplasmic segment spans residues 377–399; it reads LSQIAFRRRLPPEEVKALKFKVP. The helical transmembrane segment at 400-420 threads the bilayer; the sequence is GGVVTTIAGLIFLVFIIALIG. Topologically, residues 421 to 424 are periplasmic; that stretch reads YHPD. A helical transmembrane segment spans residues 425–445; that stretch reads TRISLYVGFAWIVLLLIGWIF. Over 446-456 the chain is Cytoplasmic; it reads KRRRDRQLAQA.

It belongs to the amino acid-polyamine-organocation (APC) superfamily. Amino acid transporter (AAT) (TC 2.A.3.1) family.

It is found in the cell inner membrane. Its function is as follows. Permease that is involved in the transport across the cytoplasmic membrane of proline. The chain is Proline-specific permease ProY (proY) from Salmonella typhimurium (strain LT2 / SGSC1412 / ATCC 700720).